A 196-amino-acid chain; its full sequence is Probable GTP-binding protein EngB (196 aa).

Residues 22–194 (DKKEIAFAGR…LKTIGEILGD (173 aa)) enclose the EngB-type G domain. GTP is bound by residues 30 to 37 (GRSNVGKS), 56 to 60 (GKTRS), 74 to 77 (DLPG), 141 to 144 (TKSD), and 173 to 175 (FSS). Positions 37 and 58 each coordinate Mg(2+).

Belongs to the TRAFAC class TrmE-Era-EngA-EngB-Septin-like GTPase superfamily. EngB GTPase family. Requires Mg(2+) as cofactor.

In terms of biological role, necessary for normal cell division and for the maintenance of normal septation. The sequence is that of Probable GTP-binding protein EngB from Petrotoga mobilis (strain DSM 10674 / SJ95).